Consider the following 740-residue polypeptide: MERPPGLRPGAGGPWEMRERLGTGGFGNVCLYQHRELDLKIAIKSCRLELSTKNRERWCHEIQIMKKLNHANVVKACDVPEELNFLINDVPLLAMEYCSGGDLRKLLNKPENCCGLKESQILSLLSDIGSGIRYLHENKIIHRDLKPENIVLQDVGGKIMHKIIDLGYAKDVDQGSLCTSFVGTLQYLAPELFENKPYTATVDYWSFGTMVFECIAGYRPFLHHLQPFTWHEKIKKKDPKCIFACEEMTGEVRFSSHLPQPNSLCSLIVEPMENWLQLMLNWDPQQRGGPVDLTLKQPRCFVLMDHILNLKIVHILNMTSAKIISFLLPPDESLHSLQSRIERETGINTGSQELLSEMGISLDPRKPASQCVLDGVRGCDSYMVYLFDKSKTVYEGPFASRSLSDCVNYIVQDSKIQLPIIQLRKVWAEAVHYVSGLKEDYSRLFQGQRAAMLSLLRYNTNLTKMKNTLISASQQLKAKLEFFHKSIQLDLERYSEQMTYGISSEKMLKAWKEMEEKAIHYAEVGVIGYLEDQIMSLHTEIMELQKSPYGRRQGDLMESLEQRAIDLYKQLKHRPSDHSYSDSTEMVKIIVHTVQSQDRVLKELFGHLSKLLGCKQKIIDLLPKVEMALSNIKEADSTVMFMQGKRQKEIWHLLKIACTQSSARSLVGSSLEGVTPQLPPTSAEREHPLSCVVTPQDGETLAQMIEENLNCLGHLSTIIHEANEKQGNNMMSLDWSWLTE.

The Protein kinase domain occupies 15–302; it reads WEMRERLGTG…LTLKQPRCFV (288 aa). ATP-binding positions include 21–29 and lysine 44; that span reads LGTGGFGNV. Threonine 23 bears the Phosphothreonine; by PKB/AKT1 mark. Catalysis depends on aspartate 144, which acts as the Proton acceptor. Serine 176 is modified (phosphoserine; by MAP3K14). Residue serine 180 is modified to Phosphoserine. Residues 455–476 are leucine-zipper; sequence LLRYNTNLTKMKNTLISASQQL. Residues 733 to 738 are NEMO-binding; it reads LDWSWL.

The protein belongs to the protein kinase superfamily. Ser/Thr protein kinase family. I-kappa-B kinase subfamily. As to quaternary structure, component of the I-kappa-B-kinase (IKK) core complex consisting of CHUK, IKBKB and IKBKG; probably four alpha/CHUK-beta/IKBKB dimers are associated with four gamma/IKBKG subunits. The IKK core complex seems to associate with regulatory or adapter proteins to form a IKK-signalosome holo-complex. The IKK complex associates with TERF2IP/RAP1, leading to promote IKK-mediated phosphorylation of RELA/p65. Part of a complex composed of NCOA2, NCOA3, CHUK/IKKA, IKBKB, IKBKG and CREBBP. Part of a 70-90 kDa complex at least consisting of CHUK/IKKA, IKBKB, NFKBIA, RELA, ELP1 and MAP3K14. Directly interacts with TRPC4AP. May interact with TRAF2. Interacts with NALP2. May interact with MAVS/IPS1. Interacts with ARRB1 and ARRB2. Interacts with NLRC5; prevents CHUK phosphorylation and kinase activity. Interacts with PIAS1; this interaction induces PIAS1 phosphorylation. Interacts with ZNF268 isoform 2; the interaction is further increased in a TNF-alpha-dependent manner. Interacts with IFIT5; the interaction synergizes the recruitment of IKK to MAP3K7 and enhances IKK phosphorylation. Interacts with LRRC14. Directly interacts with DDX3X after the physiological activation of the TLR7 and TLR8 pathways; this interaction enhances CHUK autophosphorylation. Post-translationally, ubiquitinated by TRIM56 via 'Lys-63'-linked ubiquitination, promoting activation of CHUK/IKKA. Phosphorylated by MAP3K14/NIK, AKT and to a lesser extent by MEKK1, and dephosphorylated by PP2A. Autophosphorylated.

Its subcellular location is the cytoplasm. The protein resides in the nucleus. The enzyme catalyses L-seryl-[I-kappa-B protein] + ATP = O-phospho-L-seryl-[I-kappa-B protein] + ADP + H(+). With respect to regulation, activated when phosphorylated and inactivated when dephosphorylated. Functionally, serine kinase that plays an essential role in the NF-kappa-B signaling pathway which is activated by multiple stimuli such as inflammatory cytokines, bacterial or viral products, DNA damages or other cellular stresses. Acts as a part of the canonical IKK complex in the conventional pathway of NF-kappa-B activation and phosphorylates inhibitors of NF-kappa-B on serine residues. These modifications allow polyubiquitination of the inhibitors and subsequent degradation by the proteasome. In turn, free NF-kappa-B is translocated into the nucleus and activates the transcription of hundreds of genes involved in immune response, growth control, or protection against apoptosis. Negatively regulates the pathway by phosphorylating the scaffold protein TAXBP1 and thus promoting the assembly of the A20/TNFAIP3 ubiquitin-editing complex (composed of A20/TNFAIP3, TAX1BP1, and the E3 ligases ITCH and RNF11). Therefore, CHUK plays a key role in the negative feedback of NF-kappa-B canonical signaling to limit inflammatory gene activation. As part of the non-canonical pathway of NF-kappa-B activation, the MAP3K14-activated CHUK/IKKA homodimer phosphorylates NFKB2/p100 associated with RelB, inducing its proteolytic processing to NFKB2/p52 and the formation of NF-kappa-B RelB-p52 complexes. In turn, these complexes regulate genes encoding molecules involved in B-cell survival and lymphoid organogenesis. Also participates in the negative feedback of the non-canonical NF-kappa-B signaling pathway by phosphorylating and destabilizing MAP3K14/NIK. Within the nucleus, phosphorylates CREBBP and consequently increases both its transcriptional and histone acetyltransferase activities. Modulates chromatin accessibility at NF-kappa-B-responsive promoters by phosphorylating histones H3 at 'Ser-10' that are subsequently acetylated at 'Lys-14' by CREBBP. Additionally, phosphorylates the CREBBP-interacting protein NCOA3. Also phosphorylates FOXO3 and may regulate this pro-apoptotic transcription factor. Interacts with SASH1. Phosphorylates RIPK1 at 'Ser-25' which represses its kinase activity and consequently prevents TNF-mediated RIPK1-dependent cell death. Phosphorylates AMBRA1 following mitophagy induction, promoting AMBRA1 interaction with ATG8 family proteins and its mitophagic activity. This is Inhibitor of nuclear factor kappa-B kinase subunit alpha (CHUK) from Bos taurus (Bovine).